The sequence spans 1441 residues: Protein cft1 (1441 aa).

A disordered region spans residues 741–763; the sequence is DSASETDLDIQPNHKTSNNDQMG. The span at 753–763 shows a compositional bias: polar residues; the sequence is NHKTSNNDQMG.

The protein belongs to the CFT1 family.

Its subcellular location is the cytoplasm. It localises to the nucleus. In terms of biological role, RNA-binding component of the cleavage and polyadenylation factor (CPF) complex, which plays a key role in polyadenylation-dependent pre-mRNA 3'-end formation and cooperates with cleavage factors including the CFIA complex and NAB4/CFIB. Involved in poly(A) site recognition. May be involved in coupling transcription termination and mRNA 3'-end formation. This Schizosaccharomyces pombe (strain 972 / ATCC 24843) (Fission yeast) protein is Protein cft1 (cft1).